We begin with the raw amino-acid sequence, 319 residues long: Alpha-hemolysin (319 aa).

An N-terminal signal peptide occupies residues 1-26; sequence MKTRIVSSVTTTLLLGSILMNPVAGA.

The protein belongs to the aerolysin family. As to quaternary structure, self-assembles to first form a non-lytic oligomeric intermediate, and then, a mushroom-shaped homoheptamer structure of 100 Angstroms in length and up to 100 Angstroms in diameter. Interacts with human ADAM10; this interaction is required for toxin pore formation, disruption of focal adhesions, and hly-mediated cytotoxicity.

It localises to the secreted. In terms of biological role, alpha-toxin binds to the membrane of eukaryotic cells (particularly red blood cells, RBC) forming pores, resulting in hemolysis, with the release of low-molecular weight molecules leading to eventual osmotic RBC lysis. Human RBCs bind much less alpha-toxin than do rabbit RBCs. Heptamer oligomerization and pore formation is required for lytic activity. The polypeptide is Alpha-hemolysin (hly) (Staphylococcus aureus).